The chain runs to 575 residues: Urease subunit alpha (575 aa).

The Urease domain occupies 138–575; that stretch reads GAVDCHVHLI…LPMTQRYFLF (438 aa). Ni(2+)-binding residues include His143, His145, and Lys226. Position 226 is an N6-carboxylysine (Lys226). Residue His228 coordinates substrate. Residues His255 and His281 each contribute to the Ni(2+) site. Residue His329 is the Proton donor of the active site. Position 369 (Asp369) interacts with Ni(2+).

Belongs to the metallo-dependent hydrolases superfamily. Urease alpha subunit family. Heterotrimer of UreA (gamma), UreB (beta) and UreC (alpha) subunits. Three heterotrimers associate to form the active enzyme. Ni cation serves as cofactor. Post-translationally, carboxylation allows a single lysine to coordinate two nickel ions.

Its subcellular location is the cytoplasm. It carries out the reaction urea + 2 H2O + H(+) = hydrogencarbonate + 2 NH4(+). Its pathway is nitrogen metabolism; urea degradation; CO(2) and NH(3) from urea (urease route): step 1/1. In Frankia casuarinae (strain DSM 45818 / CECT 9043 / HFP020203 / CcI3), this protein is Urease subunit alpha.